A 107-amino-acid polypeptide reads, in one-letter code: uncharacterized protein (107 aa).

This is an uncharacterized protein from Escherichia coli (strain K12).